A 399-amino-acid polypeptide reads, in one-letter code: Chorismate synthase (399 aa).

The NADP(+) site is built by Arg-40 and Arg-46. FMN is bound by residues 135–137, 256–257, Gly-301, 316–320, and Arg-342; these read RAS, QA, and KPIAT.

This sequence belongs to the chorismate synthase family. As to quaternary structure, homotetramer. FMNH2 serves as cofactor.

It catalyses the reaction 5-O-(1-carboxyvinyl)-3-phosphoshikimate = chorismate + phosphate. It participates in metabolic intermediate biosynthesis; chorismate biosynthesis; chorismate from D-erythrose 4-phosphate and phosphoenolpyruvate: step 7/7. Its function is as follows. Catalyzes the anti-1,4-elimination of the C-3 phosphate and the C-6 proR hydrogen from 5-enolpyruvylshikimate-3-phosphate (EPSP) to yield chorismate, which is the branch point compound that serves as the starting substrate for the three terminal pathways of aromatic amino acid biosynthesis. This reaction introduces a second double bond into the aromatic ring system. The chain is Chorismate synthase from Pseudarthrobacter chlorophenolicus (strain ATCC 700700 / DSM 12829 / CIP 107037 / JCM 12360 / KCTC 9906 / NCIMB 13794 / A6) (Arthrobacter chlorophenolicus).